A 381-amino-acid chain; its full sequence is Alkanesulfonate monooxygenase (381 aa).

This sequence belongs to the SsuD family. Homotetramer.

It catalyses the reaction an alkanesulfonate + FMNH2 + O2 = an aldehyde + FMN + sulfite + H2O + 2 H(+). Its function is as follows. Catalyzes the desulfonation of aliphatic sulfonates. The sequence is that of Alkanesulfonate monooxygenase from Cronobacter sakazakii (strain ATCC BAA-894) (Enterobacter sakazakii).